The following is a 627-amino-acid chain: Protein CER1-like 1 (627 aa).

Helical transmembrane passes span 19 to 39 (FKYL…VTAV), 48 to 68 (LMIV…ISVS), 126 to 146 (GAIL…YWFH), 186 to 206 (LLFA…IVSI), and 328 to 348 (YLTC…TSAI). In terms of domain architecture, Fatty acid hydroxylase spans 138-272 (VEFLYYWFHR…MPIYDFIYGT (135 aa)).

This sequence belongs to the sterol desaturase family. Expressed in flowers and siliques. Not detected in pollen, pedicels and seeds.

The protein localises to the membrane. The polypeptide is Protein CER1-like 1 (Arabidopsis thaliana (Mouse-ear cress)).